Here is a 24-residue protein sequence, read N- to C-terminus: RHHRKRIGHTVKQLAKLVKHIHEY.

Expressed by the skin glands.

Its subcellular location is the secreted. This is Skin secreted peptide 1 from Ascaphus truei (Coastal tailed frog).